Here is a 185-residue protein sequence, read N- to C-terminus: Signal peptidase complex subunit 3 (185 aa).

Over methionine 1 to serine 16 the chain is Cytoplasmic. A helical; Signal-anchor for type II membrane protein transmembrane segment spans residues threonine 17 to alanine 37. Over asparagine 38–valine 185 the chain is Lumenal. A glycan (N-linked (GlcNAc...) asparagine) is linked at asparagine 151.

It belongs to the SPCS3 family. Component of the signal peptidase complex (SPC) composed of a catalytic subunit SEC11 and three accessory subunits SPC1, SPC2 and SPC3. The complex induces a local thinning of the ER membrane which is used to measure the length of the signal peptide (SP) h-region of protein substrates. This ensures the selectivity of the complex towards h-regions shorter than 18-20 amino acids. SPC associates with the translocon complex.

Its subcellular location is the endoplasmic reticulum membrane. Its function is as follows. Essential component of the signal peptidase complex (SPC) which catalyzes the cleavage of N-terminal signal sequences from nascent proteins as they are translocated into the lumen of the endoplasmic reticulum. Essential for the SPC catalytic activity, possibly by stabilizing and positioning the active center of the complex close to the lumenal surface. Essential for viability. This chain is Signal peptidase complex subunit 3 (SPC3), found in Yarrowia lipolytica (strain CLIB 122 / E 150) (Yeast).